Reading from the N-terminus, the 329-residue chain is GMP reductase (329 aa).

Cysteine 178 functions as the Thioimidate intermediate in the catalytic mechanism. 207-230 (IIADGGIRNNGDIAKSIRFGATMC) contributes to the NADP(+) binding site.

Belongs to the IMPDH/GMPR family. GuaC type 2 subfamily.

It carries out the reaction IMP + NH4(+) + NADP(+) = GMP + NADPH + 2 H(+). Its function is as follows. Catalyzes the irreversible NADPH-dependent deamination of GMP to IMP. It functions in the conversion of nucleobase, nucleoside and nucleotide derivatives of G to A nucleotides, and in maintaining the intracellular balance of A and G nucleotides. This is GMP reductase from Lacticaseibacillus casei (strain BL23) (Lactobacillus casei).